Here is a 337-residue protein sequence, read N- to C-terminus: S-adenosylmethionine:tRNA ribosyltransferase-isomerase (337 aa).

Belongs to the QueA family. Monomer.

The protein localises to the cytoplasm. It carries out the reaction 7-aminomethyl-7-carbaguanosine(34) in tRNA + S-adenosyl-L-methionine = epoxyqueuosine(34) in tRNA + adenine + L-methionine + 2 H(+). It functions in the pathway tRNA modification; tRNA-queuosine biosynthesis. Transfers and isomerizes the ribose moiety from AdoMet to the 7-aminomethyl group of 7-deazaguanine (preQ1-tRNA) to give epoxyqueuosine (oQ-tRNA). This Legionella pneumophila (strain Paris) protein is S-adenosylmethionine:tRNA ribosyltransferase-isomerase.